We begin with the raw amino-acid sequence, 607 residues long: MDNEQRLKRRENIRNFSIIAHIDHGKSTLADRILENTKSVETRDMQDQLLDSMDLERERGITIKLNAVRLKYEAKDGNTYTFHLIDTPGHVDFTYEVSRSLAACEGAILVVDAAQGIEAQTLANVYLALDNELELLPVINKIDLPAAEPERVKQEIEDMIGLDQDDVVLASAKSNIGIEEILEKIVEVVPAPDGDPEAPLKALIFDSEYDPYRGVISSIRIVDGVVKAGDKIRMMATGKEFEVTEVGINTPKQLPVDELTVGDVGYIIASIKNVDDSRVGDTITLASRPASEPLQGYKKMNPMVYCGLFPIDNKNYNDLREALEKLQLNDASLEFEPESSQALGFGYRTGFLGMLHMEIIQERIEREFGIELIATAPSVIYQCILRDGSEVTVDNPAQMPDRDKIDKIFEPYVRATMMVPNDYVGAVMELCQRKRGQFINMDYLDDIRVNIVYELPLAEVVFDFFDQLKSNTKGYASFDYEFIENKESNLVKMDILLNGDKVDALSFIVHRDFAYERGKALVEKLKTLIPRQQFEVPVQAAIGQKIVARTNIKSMGKNVLAKCYGGDISRKRKLLEKQKAGKAKMKAVGNIEIPQDAFLAVLKMDDE.

Residues 11 to 193 (ENIRNFSIIA…KIVEVVPAPD (183 aa)) enclose the tr-type G domain. GTP-binding positions include 23 to 28 (DHGKST) and 140 to 143 (NKID).

Belongs to the TRAFAC class translation factor GTPase superfamily. Classic translation factor GTPase family. LepA subfamily.

Its subcellular location is the cell membrane. It catalyses the reaction GTP + H2O = GDP + phosphate + H(+). In terms of biological role, required for accurate and efficient protein synthesis under certain stress conditions. May act as a fidelity factor of the translation reaction, by catalyzing a one-codon backward translocation of tRNAs on improperly translocated ribosomes. Back-translocation proceeds from a post-translocation (POST) complex to a pre-translocation (PRE) complex, thus giving elongation factor G a second chance to translocate the tRNAs correctly. Binds to ribosomes in a GTP-dependent manner. In Staphylococcus aureus (strain MW2), this protein is Elongation factor 4.